A 1038-amino-acid chain; its full sequence is Bone morphogenetic protein receptor type-2 (1038 aa).

Residues 1 to 26 (MTSSLQRPWRVPWLPWTILLVSTAAA) form the signal peptide. Residues 27 to 150 (SQNQERLCAF…PPHSFNRDET (124 aa)) lie on the Extracellular side of the membrane. 5 cysteine pairs are disulfide-bonded: C34–C66, C60–C84, C94–C117, C99–C116, and C118–C123. N55 carries an N-linked (GlcNAc...) asparagine glycan. The N-linked (GlcNAc...) asparagine glycan is linked to N110. A glycan (N-linked (GlcNAc...) asparagine) is linked at N126. Residues 151–171 (IIIALASVSVLAVLIVALCFG) form a helical membrane-spanning segment. Residues 172–1038 (YRMLTGDRKQ…VSKDIGMNCL (867 aa)) lie on the Cytoplasmic side of the membrane. One can recognise a Protein kinase domain in the interval 203–504 (LKLLELIGRG…QCAEERMAEL (302 aa)). ATP-binding positions include 209-217 (IGRGRYGAV), K230, and 280-282 (EYY). Catalysis depends on D333, which acts as the Proton acceptor. ATP is bound by residues 337 to 338 (RN) and D351. Position 379 is a phosphothreonine (T379). S586 bears the Phosphoserine mark. The tract at residues 593–626 (QAQARIPSPETSVTSLSTNTTTTNTTGLTPSTGM) is disordered. A compositionally biased stretch (low complexity) spans 603 to 626 (TSVTSLSTNTTTTNTTGLTPSTGM). Residues S680 and S681 each carry the phosphoserine modification. 2 disordered regions span residues 746–770 (PKQQNLPKRPTSLPLNTKNSTKEPR) and 872–972 (RREQ…EKIK). Residues 872 to 896 (RREQQAGHDEGVLDRLVDRRERPLE) show a composition bias toward basic and acidic residues. A compositionally biased stretch (polar residues) spans 937-964 (RPNSLDLSATNVLDGSSIQIGESTQDGK).

This sequence belongs to the protein kinase superfamily. TKL Ser/Thr protein kinase family. TGFB receptor subfamily. In terms of assembly, interacts with GDF5. Interacts with BMP4. Interacts with SCUBE3. Interacts with TSC22D1/TSC-22. Interacts with activin A/INHBA. Mg(2+) is required as a cofactor. Mn(2+) serves as cofactor. Highly expressed in heart and liver.

Its subcellular location is the cell membrane. The catalysed reaction is L-threonyl-[receptor-protein] + ATP = O-phospho-L-threonyl-[receptor-protein] + ADP + H(+). It catalyses the reaction L-seryl-[receptor-protein] + ATP = O-phospho-L-seryl-[receptor-protein] + ADP + H(+). In terms of biological role, on ligand binding, forms a receptor complex consisting of two type II and two type I transmembrane serine/threonine kinases. Type II receptors phosphorylate and activate type I receptors which autophosphorylate, then bind and activate SMAD transcriptional regulators. Can also mediate signaling through the activation of the p38MAPK cascade. Binds to BMP7, BMP2 and, less efficiently, BMP4. Binding is weak but enhanced by the presence of type I receptors for BMPs. Mediates induction of adipogenesis by GDF6. Promotes signaling also by binding to activin A/INHBA. This is Bone morphogenetic protein receptor type-2 (BMPR2) from Homo sapiens (Human).